The following is a 234-amino-acid chain: MVYASLGKAIEENCPEEYVEQAIQNDPNSLNAVDDDKRTPLHWACSVGKVNTIYFLLKQPNIKPDEKDEAGWTPLMISINNRSVPDNVIEELINRSDVDPTITTRGGQTCLHYAAGKGRLSIVQLLCDKAPELIRKKDLQGQTPLHRAAAVGKIQVVKYLISQRAPLNTSDSYGFTPLHFALAEGHPDVGVELVRAGADTLRKDSENHTALEVCPDRIVCNEFLEACKEQNLEI.

5 ANK repeats span residues 36–66 (DKRT…KPDE), 70–100 (AGWT…DVDP), 106–135 (GGQT…ELIR), 140–169 (QGQT…PLNT), and 173–203 (YGFT…TLRK).

This is Ankyrin repeat-containing protein C6C3.08 from Schizosaccharomyces pombe (strain 972 / ATCC 24843) (Fission yeast).